The primary structure comprises 284 residues: Bifunctional protein FolD 1 (284 aa).

NADP(+)-binding positions include 166–168 (GAS) and Ile232.

This sequence belongs to the tetrahydrofolate dehydrogenase/cyclohydrolase family. In terms of assembly, homodimer.

It catalyses the reaction (6R)-5,10-methylene-5,6,7,8-tetrahydrofolate + NADP(+) = (6R)-5,10-methenyltetrahydrofolate + NADPH. It carries out the reaction (6R)-5,10-methenyltetrahydrofolate + H2O = (6R)-10-formyltetrahydrofolate + H(+). It functions in the pathway one-carbon metabolism; tetrahydrofolate interconversion. Catalyzes the oxidation of 5,10-methylenetetrahydrofolate to 5,10-methenyltetrahydrofolate and then the hydrolysis of 5,10-methenyltetrahydrofolate to 10-formyltetrahydrofolate. This Ectopseudomonas mendocina (strain ymp) (Pseudomonas mendocina) protein is Bifunctional protein FolD 1.